The primary structure comprises 181 residues: Large ribosomal subunit protein uL5 (181 aa).

Belongs to the universal ribosomal protein uL5 family. Part of the 50S ribosomal subunit; part of the 5S rRNA/L5/L18/L25 subcomplex. Contacts the 5S rRNA and the P site tRNA. Forms a bridge to the 30S subunit in the 70S ribosome.

Functionally, this is one of the proteins that bind and probably mediate the attachment of the 5S RNA into the large ribosomal subunit, where it forms part of the central protuberance. In the 70S ribosome it contacts protein S13 of the 30S subunit (bridge B1b), connecting the 2 subunits; this bridge is implicated in subunit movement. Contacts the P site tRNA; the 5S rRNA and some of its associated proteins might help stabilize positioning of ribosome-bound tRNAs. This Helicobacter pylori (strain HPAG1) protein is Large ribosomal subunit protein uL5.